A 378-amino-acid polypeptide reads, in one-letter code: MTSPRKTHPLMKIINSSFIDLPTPSNISSWWNFGSLLGACLMIQITTGLFLAMHYTPDTSTAFSSVAHITRDINYGWMIRLLHANGASMFFVCLFLHTGRGLYYGSFLFLNTWNIGTILLLMTMATAFMGYVLPWGQMSFWGATVITNLLSAIPYTGHNLVQWIWGGFSVDKPTLTRFFTFHFILPFIITALATIHLLFLHETGSNNPSGMASSPDKIMFHPYYTTKDIFGLTLLLLLLTSLTLFTPDLLTDPDNYTLANPLNTPPHIKPEWYFLFAYTILRSIPNKLGGVLALLLSIMILTIIPATHLSKQQSMMFRPITQILFWTLAADLLTLTWIGGQPVEYPFEAIGQTASIAYFLIITLIPLSALTENKLLKW.

The next 4 helical transmembrane spans lie at 33-53 (FGSLLGACLMIQITTGLFLAM), 77-98 (WMIRLLHANGASMFFVCLFLHT), 113-133 (WNIGTILLLMTMATAFMGYVL), and 178-198 (FFTFHFILPFIITALATIHLL). Positions 83 and 97 each coordinate heme b. Heme b is bound by residues histidine 182 and histidine 196. Histidine 201 provides a ligand contact to a ubiquinone. 4 helical membrane-spanning segments follow: residues 226–246 (TKDIFGLTLLLLLLTSLTLFT), 288–308 (LGGVLALLLSIMILTIIPATH), 320–340 (ITQILFWTLAADLLTLTWIGG), and 347–366 (FEAIGQTASIAYFLIITLIP).

It belongs to the cytochrome b family. As to quaternary structure, the cytochrome bc1 complex contains 11 subunits: 3 respiratory subunits (MT-CYB, CYC1 and UQCRFS1), 2 core proteins (UQCRC1 and UQCRC2) and 6 low-molecular weight proteins (UQCRH/QCR6, UQCRB/QCR7, UQCRQ/QCR8, UQCR10/QCR9, UQCR11/QCR10 and a cleavage product of UQCRFS1). This cytochrome bc1 complex then forms a dimer. Requires heme b as cofactor.

It localises to the mitochondrion inner membrane. Its function is as follows. Component of the ubiquinol-cytochrome c reductase complex (complex III or cytochrome b-c1 complex) that is part of the mitochondrial respiratory chain. The b-c1 complex mediates electron transfer from ubiquinol to cytochrome c. Contributes to the generation of a proton gradient across the mitochondrial membrane that is then used for ATP synthesis. This is Cytochrome b (MT-CYB) from Cebus albifrons (White-fronted capuchin).